Here is a 622-residue protein sequence, read N- to C-terminus: MSGPVDTAKSITKKRKRKHGGGARAATETDDATTQPVVENGAVTDSPEKGEDTKKSEKNGKDKSTKKRKVSHASSDEENESEGEQGAPSQADGDSDNNGDDGDDNSEAENGDNGDKKDAESTDLPSADALRLPTVEGEPQKFTELGLTEKTLKAINDMGFDTMTEIQRRTIPPLLAGRDVLGAAKTGSGKTLSFLIPAVEMLSALRFKPRNGTGVIVVSPTRELALQIFGVARELCQYHSQTYGIVIGGANRRAEAEKLMKGVNLLIATPGRLLDHLQNTQGFIFKNLKTLVIDEADRILEVGFEDEMRQIVKILPSEERQTMLFSATQTTKVEDLARISLRPGPLYINVDHRKEHSTVEGLEQGYVICEADKRFLLLFSFLKRNLKKKIIVFFSSCNCVKYHAELLNYIDLPVLELHGKQKQQKRTNTFFEFCNAKQGTLICTDVAARGLDIPAVDWIIQFDPPDDPRDYIHRVGRTARGANAKGRSLMFLQPSEVGFLKHLKEARVPVVEFEFPANKIVNVQSQLEKLIGQNYYLNKSAKEGYRSYLQAYASHSLRSVFDVHKLDLVKVAKGFGFSTPPRIDIQLGASLSRDKKQQQQGRRNYGSQPHSKGLKFKRKHDD.

The tract at residues 1–137 (MSGPVDTAKS…DALRLPTVEG (137 aa)) is disordered. Residues 11 to 21 (ITKKRKRKHGG) are compositionally biased toward basic residues. Basic and acidic residues predominate over residues 46 to 63 (SPEKGEDTKKSEKNGKDK). The span at 93-112 (GDSDNNGDDGDDNSEAENGD) shows a compositional bias: acidic residues. The short motif at 140-168 (QKFTELGLTEKTLKAINDMGFDTMTEIQR) is the Q motif element. The region spanning 171–347 (IPPLLAGRDV…RISLRPGPLY (177 aa)) is the Helicase ATP-binding domain. 184–191 (AKTGSGKT) serves as a coordination point for ATP. A DEAD box motif is present at residues 294 to 297 (DEAD). Positions 361–531 (GLEQGYVICE…NVQSQLEKLI (171 aa)) constitute a Helicase C-terminal domain. The interval 588–622 (GASLSRDKKQQQQGRRNYGSQPHSKGLKFKRKHDD) is disordered. Polar residues predominate over residues 598-610 (QQQGRRNYGSQPH). The segment covering 612 to 622 (KGLKFKRKHDD) has biased composition (basic residues).

It belongs to the DEAD box helicase family. DDX18/HAS1 subfamily. In terms of assembly, associates in the nucleolus with the 60S and pre-60S ribosomal subunits.

The protein resides in the nucleus. It localises to the nucleolus. The catalysed reaction is ATP + H2O = ADP + phosphate + H(+). ATP-dependent RNA helicase involved in 40S ribosomal subunit biogenesis. Required for the processing and cleavage of 35S pre-rRNA at sites A0, A1, and A2, leading to mature 18S rRNA. The polypeptide is ATP-dependent RNA helicase has1 (has1) (Neosartorya fischeri (strain ATCC 1020 / DSM 3700 / CBS 544.65 / FGSC A1164 / JCM 1740 / NRRL 181 / WB 181) (Aspergillus fischerianus)).